A 337-amino-acid chain; its full sequence is Glyceraldehyde-3-phosphate dehydrogenase (337 aa).

NAD(+)-binding positions include 12-13 (RI), Asp34, and Arg79. Residues 150-152 (SCT), Thr181, 210-211 (TG), and Arg233 contribute to the D-glyceraldehyde 3-phosphate site. The active-site Nucleophile is the Cys151. Asn315 is an NAD(+) binding site.

It belongs to the glyceraldehyde-3-phosphate dehydrogenase family. Homotetramer.

The protein localises to the cytoplasm. The catalysed reaction is D-glyceraldehyde 3-phosphate + phosphate + NAD(+) = (2R)-3-phospho-glyceroyl phosphate + NADH + H(+). Its pathway is carbohydrate degradation; glycolysis; pyruvate from D-glyceraldehyde 3-phosphate: step 1/5. In Claviceps purpurea (strain 20.1) (Ergot fungus), this protein is Glyceraldehyde-3-phosphate dehydrogenase (GPD-1).